The chain runs to 147 residues: Hemoglobin subunit epsilon (147 aa).

The Globin domain maps to 3 to 147 (HLTAEEKAAI…VAIALGHKYH (145 aa)). 2 positions are modified to phosphoserine: S14 and S51. Heme b contacts are provided by H64 and H93.

This sequence belongs to the globin family. Heterotetramer of two alpha chains and two epsilon chains in early embryonic hemoglobin Gower-2; two zeta chains and two epsilon chains in early embryonic hemoglobin Gower-1. As to expression, red blood cells.

In terms of biological role, the epsilon chain is a beta-type chain of early mammalian embryonic hemoglobin. In Ateles belzebuth (White-bellied spider monkey), this protein is Hemoglobin subunit epsilon (HBE1).